A 462-amino-acid polypeptide reads, in one-letter code: Argininosuccinate lyase (462 aa).

Belongs to the lyase 1 family. Argininosuccinate lyase subfamily.

It localises to the cytoplasm. It carries out the reaction 2-(N(omega)-L-arginino)succinate = fumarate + L-arginine. It functions in the pathway amino-acid biosynthesis; L-arginine biosynthesis; L-arginine from L-ornithine and carbamoyl phosphate: step 3/3. The polypeptide is Argininosuccinate lyase (Streptococcus agalactiae serotype III (strain NEM316)).